The following is a 240-amino-acid chain: Enoyl-CoA delta isomerase 1, peroxisomal (240 aa).

Positions 238-240 match the Microbody targeting signal motif; the sequence is SKL.

This sequence belongs to the enoyl-CoA hydratase/isomerase family.

The protein resides in the peroxisome. The enzyme catalyses a (3Z)-enoyl-CoA = a 4-saturated (2E)-enoyl-CoA. The catalysed reaction is a (3E)-enoyl-CoA = a 4-saturated (2E)-enoyl-CoA. It functions in the pathway lipid metabolism; fatty acid beta-oxidation. In terms of biological role, able to isomerize both 3-cis and 3-trans double bonds into the 2-trans form in a range of enoyl-CoA species. Essential for the beta oxidation of unsaturated fatty acids. In Arabidopsis thaliana (Mouse-ear cress), this protein is Enoyl-CoA delta isomerase 1, peroxisomal.